The primary structure comprises 589 residues: Parathyroid hormone/parathyroid hormone-related peptide receptor (589 aa).

Positions 1–28 (MGAARIAPGLALLLCCPVLSSAYALVDA) are cleaved as a signal peptide. Residues 29 to 188 (DDVMTKEEQI…REREVFDRLG (160 aa)) are Extracellular-facing. 3 disulfide bridges follow: C48–C117, C108–C148, and C131–C170. Residues 64–105 (ESDKGWASASTSGKPKKEKPSGKLHPESEEDKEVPTGSRPRG) form a disordered region. Positions 81–90 (EKPSGKLHPE) are enriched in basic and acidic residues. N-linked (GlcNAc...) asparagine glycosylation is found at N151, N161, N166, and N176. A helical membrane pass occupies residues 189 to 209 (MIYTVGYSVSLASLTVAVLIL). Residues 210-223 (AYFRRLHCTRNYIH) are Cytoplasmic-facing. Residues 224 to 244 (MHLFLSFMLRAVSIFVKDAVL) form a helical membrane-spanning segment. The Extracellular segment spans residues 245-294 (YSGTALDEAERLTEEELRAIAQAPPPPAAAAGYVGCRVAVTFFLYFLATN). Residues 295-315 (YYWILVEGLYLHSLIFMAFFS) traverse the membrane as a helical segment. The Cytoplasmic portion of the chain corresponds to 316–318 (EKK). A helical membrane pass occupies residues 319-339 (YLWGFTVFGWGLPAIFVAVWV). Topologically, residues 340 to 360 (SVRATLANTGCWDLSSGNKKW) are extracellular. Residues 361 to 381 (IIQVPILASIVLNFILFINIV) form a helical membrane-spanning segment. Over 382 to 404 (RVLATKLRETNAGRCDTRQQYRK) the chain is Cytoplasmic. A helical membrane pass occupies residues 405-425 (LLKSTLVLMPLFGVHYIVFMA). Residues 426–439 (TPYTEVSGTLWQVQ) lie on the Extracellular side of the membrane. Residues 440-460 (MHYEMLFNSFQGFFVAIIYCF) traverse the membrane as a helical segment. Over 461–589 (CNGEVQAEIK…LLQEEWETVM (129 aa)) the chain is Cytoplasmic. The Important for interaction with G proteins motif lies at 473 to 476 (WSRW). Positions 524 to 549 (AATTNGHPPLPGHTKSGSPALQATPP) are disordered. At T547 the chain carries Phosphothreonine.

The protein belongs to the G-protein coupled receptor 2 family. Homodimer in the absence of bound ligand. Peptide hormone binding leads to dissociation of the homodimer. N-glycosylated.

Its subcellular location is the cell membrane. Functionally, G-protein-coupled receptor for parathyroid hormone (PTH) and for parathyroid hormone-related peptide (PTHLH). Ligand binding causes a conformation change that triggers signaling via guanine nucleotide-binding proteins (G proteins) and modulates the activity of downstream effectors, such as adenylate cyclase (cAMP). PTH1R is coupled to G(s) G alpha proteins and mediates activation of adenylate cyclase activity. PTHLH dissociates from PTH1R more rapidly than PTH; as consequence, the cAMP response induced by PTHLH decays faster than the response induced by PTH. The sequence is that of Parathyroid hormone/parathyroid hormone-related peptide receptor (PTH1R) from Bos taurus (Bovine).